A 297-amino-acid chain; its full sequence is uncharacterized protein (297 aa).

A disordered region spans residues 1-44; that stretch reads MQKSKSIFIPKAFAPQQQAQAPPSKLDNKDPSVEGEGASKPKDD. Residues 10–23 show a composition bias toward low complexity; it reads PKAFAPQQQAQAPP. Basic and acidic residues predominate over residues 26–44; that stretch reads LDNKDPSVEGEGASKPKDD.

This is an uncharacterized protein from Invertebrate iridescent virus 3 (IIV-3).